The primary structure comprises 348 residues: UPF0283 membrane protein PBPRA2435 (348 aa).

3 consecutive transmembrane segments (helical) span residues 71-91, 97-117, and 211-231; these read GLLI…VVSA, WLAL…ITAL, and EAAV…LVAW.

Belongs to the UPF0283 family.

The protein resides in the cell inner membrane. This chain is UPF0283 membrane protein PBPRA2435, found in Photobacterium profundum (strain SS9).